A 216-amino-acid chain; its full sequence is ATP-dependent Clp protease proteolytic subunit (216 aa).

Ser-109 acts as the Nucleophile in catalysis. Residue His-134 is part of the active site.

The protein belongs to the peptidase S14 family. As to quaternary structure, fourteen ClpP subunits assemble into 2 heptameric rings which stack back to back to give a disk-like structure with a central cavity, resembling the structure of eukaryotic proteasomes.

The protein resides in the cytoplasm. It catalyses the reaction Hydrolysis of proteins to small peptides in the presence of ATP and magnesium. alpha-casein is the usual test substrate. In the absence of ATP, only oligopeptides shorter than five residues are hydrolyzed (such as succinyl-Leu-Tyr-|-NHMec, and Leu-Tyr-Leu-|-Tyr-Trp, in which cleavage of the -Tyr-|-Leu- and -Tyr-|-Trp bonds also occurs).. Its function is as follows. Cleaves peptides in various proteins in a process that requires ATP hydrolysis. Has a chymotrypsin-like activity. Plays a major role in the degradation of misfolded proteins. This is ATP-dependent Clp protease proteolytic subunit from Rhodospirillum rubrum (strain ATCC 11170 / ATH 1.1.1 / DSM 467 / LMG 4362 / NCIMB 8255 / S1).